The chain runs to 55 residues: Mitochondrial import receptor subunit TOM7 homolog (55 aa).

Residues 1–20 (MVKLSKEAKQRLQQLFKGSQ) are Cytoplasmic-facing. The helical transmembrane segment at 21-36 (FAIRWGFIPLVIYLGF) threads the bilayer. Over 37-55 (KRGADPGMPEPTVLSLLWG) the chain is Mitochondrial intermembrane.

The protein belongs to the Tom7 family. Forms part of the preprotein translocase complex of the outer mitochondrial membrane (TOM complex) which consists of at least 7 different proteins (TOMM5, TOMM6, TOMM7, TOMM20, TOMM22, TOMM40 and TOMM70).

Its subcellular location is the mitochondrion outer membrane. In terms of biological role, required for assembly and stability of the TOM complex. Positive regulator of PRKN translocation to damaged mitochondria. Acts probably by stabilizing PINK1 on the outer membrane of depolarized mitochondria. This is Mitochondrial import receptor subunit TOM7 homolog (TOMM7) from Homo sapiens (Human).